A 270-amino-acid chain; its full sequence is 5-deoxy-glucuronate isomerase (270 aa).

The protein belongs to the isomerase IolB family.

The enzyme catalyses 5-deoxy-D-glucuronate = 5-dehydro-2-deoxy-D-gluconate. Its pathway is polyol metabolism; myo-inositol degradation into acetyl-CoA; acetyl-CoA from myo-inositol: step 4/7. Its function is as follows. Involved in the isomerization of 5-deoxy-glucuronate (5DG) to 5-dehydro-2-deoxy-D-gluconate (DKG or 2-deoxy-5-keto-D-gluconate). The sequence is that of 5-deoxy-glucuronate isomerase from Halalkalibacterium halodurans (strain ATCC BAA-125 / DSM 18197 / FERM 7344 / JCM 9153 / C-125) (Bacillus halodurans).